The primary structure comprises 106 residues: Iron-sulfur cluster assembly protein CyaY (106 aa).

The protein belongs to the frataxin family.

Its function is as follows. Involved in iron-sulfur (Fe-S) cluster assembly. May act as a regulator of Fe-S biogenesis. This Escherichia coli O6:H1 (strain CFT073 / ATCC 700928 / UPEC) protein is Iron-sulfur cluster assembly protein CyaY.